The chain runs to 133 residues: Ribosome-binding factor A (133 aa).

Belongs to the RbfA family. As to quaternary structure, monomer. Binds 30S ribosomal subunits, but not 50S ribosomal subunits or 70S ribosomes.

Its subcellular location is the cytoplasm. Functionally, one of several proteins that assist in the late maturation steps of the functional core of the 30S ribosomal subunit. Associates with free 30S ribosomal subunits (but not with 30S subunits that are part of 70S ribosomes or polysomes). Required for efficient processing of 16S rRNA. May interact with the 5'-terminal helix region of 16S rRNA. The chain is Ribosome-binding factor A from Shigella boydii serotype 18 (strain CDC 3083-94 / BS512).